The following is a 495-amino-acid chain: Glucose-6-phosphate 1-dehydrogenase (495 aa).

NADP(+) contacts are provided by residues 11-18, Arg-45, 84-85, and Lys-147; these read GASGDLAK and DV. Substrate-binding residues include His-177, Lys-181, Glu-215, and Asp-234. His-239 functions as the Proton acceptor in the catalytic mechanism. Substrate is bound by residues Lys-339 and Lys-344.

Belongs to the glucose-6-phosphate dehydrogenase family.

The catalysed reaction is D-glucose 6-phosphate + NADP(+) = 6-phospho-D-glucono-1,5-lactone + NADPH + H(+). The protein operates within carbohydrate degradation; pentose phosphate pathway; D-ribulose 5-phosphate from D-glucose 6-phosphate (oxidative stage): step 1/3. Functionally, catalyzes the oxidation of glucose 6-phosphate to 6-phosphogluconolactone. The polypeptide is Glucose-6-phosphate 1-dehydrogenase (Streptococcus pneumoniae serotype 4 (strain ATCC BAA-334 / TIGR4)).